The sequence spans 416 residues: MLEQLTSLPDWLARGVADLFPLATNNSEKDQSLLLRLSQASRSNVPLRVKLGIDPTGSEIHLGHSIIFRKLRAFQDAGHTAILIIGDFTARIGDPTGKSKTRVQLSPEEVEKNSENYLNQLGKGQSKETSLLDFETEGRLEVRRNSEWLEGFDMVQIIDLLSKSTVGQMLAKEEFANRYTSGTSIALHEFLYPLFQGYDSVAVQADVELGGVDQKFNVAMGRDMQRHFSQKPQFGLLLPILVGLDGVQKMSKSLGNTVGLAEDALSMYSKLEKVPDSQVNNYLTLLTDCEIRDLTLNARELQKFMALNVTAQFHGLSVAKIAQKDASKIVSGLKETVEDVPVLSVSNVNFPTKAFHLLSSIGLCSSSSNARRQIQGGALRIDGKKILDPNFEFVDQKDIVGKILQLGKKTFRRISN.

Positions 55–64 match the 'HIGH' region motif; it reads PTGSEIHLGH. Positions 249-253 match the 'KMSKS' region motif; that stretch reads KMSKS. Lys252 contributes to the ATP binding site. The region spanning 352 to 416 is the S4 RNA-binding domain; sequence TKAFHLLSSI…GKKTFRRISN (65 aa).

The protein belongs to the class-I aminoacyl-tRNA synthetase family. TyrS type 2 subfamily. Homodimer.

Its subcellular location is the cytoplasm. It catalyses the reaction tRNA(Tyr) + L-tyrosine + ATP = L-tyrosyl-tRNA(Tyr) + AMP + diphosphate + H(+). Catalyzes the attachment of tyrosine to tRNA(Tyr) in a two-step reaction: tyrosine is first activated by ATP to form Tyr-AMP and then transferred to the acceptor end of tRNA(Tyr). In Prochlorococcus marinus (strain SARG / CCMP1375 / SS120), this protein is Tyrosine--tRNA ligase.